The chain runs to 391 residues: Inactive polyketide synthase 2 (391 aa).

Residue C164 is part of the active site.

The protein belongs to the thiolase-like superfamily. Chalcone/stilbene synthases family. As to quaternary structure, homodimer.

This Rubus idaeus (Raspberry) protein is Inactive polyketide synthase 2 (PKS2).